The chain runs to 84 residues: Tripartite terminase subunit 2 (84 aa).

This sequence belongs to the herpesviridae TRM2 protein family. In terms of assembly, associates with TRM1 and TRM3 to form the tripartite terminase complex.

The protein localises to the host nucleus. Functionally, component of the molecular motor that translocates viral genomic DNA in empty capsid during DNA packaging. Forms a tripartite terminase complex together with TRM1 and TRM3 in the host cytoplasm. Once the complex reaches the host nucleus, it interacts with the capsid portal vertex. This portal forms a ring in which genomic DNA is translocated into the capsid. This chain is Tripartite terminase subunit 2, found in Alcelaphine herpesvirus 1 (strain C500) (AlHV-1).